We begin with the raw amino-acid sequence, 298 residues long: tRNA pseudouridine synthase A (298 aa).

Asp-56 (nucleophile) is an active-site residue. Tyr-125 contacts substrate.

Belongs to the tRNA pseudouridine synthase TruA family. In terms of assembly, homodimer.

The enzyme catalyses uridine(38/39/40) in tRNA = pseudouridine(38/39/40) in tRNA. Its function is as follows. Formation of pseudouridine at positions 38, 39 and 40 in the anticodon stem and loop of transfer RNAs. The sequence is that of tRNA pseudouridine synthase A from Bifidobacterium animalis subsp. lactis (strain AD011).